A 155-amino-acid chain; its full sequence is Protein-export protein SecB (155 aa).

The protein belongs to the SecB family. Homotetramer, a dimer of dimers. One homotetramer interacts with 1 SecA dimer.

It is found in the cytoplasm. In terms of biological role, one of the proteins required for the normal export of preproteins out of the cell cytoplasm. It is a molecular chaperone that binds to a subset of precursor proteins, maintaining them in a translocation-competent state. It also specifically binds to its receptor SecA. This is Protein-export protein SecB from Klebsiella pneumoniae subsp. pneumoniae (strain ATCC 700721 / MGH 78578).